Reading from the N-terminus, the 366-residue chain is Holliday junction branch migration complex subunit RuvB (366 aa).

The disordered stretch occupies residues 1–48 (MIDRLMAREAIYQQSNPDPGGDPPEDGPPHGKNAADGGDEPDRGPDPD). The tract at residues 21–212 (GDPPEDGPPH…FQIREHLGWY (192 aa)) is large ATPase domain (RuvB-L). ATP is bound by residues L51, R52, G93, K96, T97, T98, 159–161 (EDF), R202, Y212, and R249. T97 is a Mg(2+) binding site. A small ATPAse domain (RuvB-S) region spans residues 213–283 (TRKELAEIVL…VCEAALDMIG (71 aa)). The tract at residues 286–366 (HLGLDKQDRN…KRQMPDRPLS (81 aa)) is head domain (RuvB-H). DNA contacts are provided by R341, R343, and R346.

The protein belongs to the RuvB family. As to quaternary structure, homohexamer. Forms an RuvA(8)-RuvB(12)-Holliday junction (HJ) complex. HJ DNA is sandwiched between 2 RuvA tetramers; dsDNA enters through RuvA and exits via RuvB. An RuvB hexamer assembles on each DNA strand where it exits the tetramer. Each RuvB hexamer is contacted by two RuvA subunits (via domain III) on 2 adjacent RuvB subunits; this complex drives branch migration. In the full resolvosome a probable DNA-RuvA(4)-RuvB(12)-RuvC(2) complex forms which resolves the HJ.

The protein localises to the cytoplasm. It carries out the reaction ATP + H2O = ADP + phosphate + H(+). Functionally, the RuvA-RuvB-RuvC complex processes Holliday junction (HJ) DNA during genetic recombination and DNA repair, while the RuvA-RuvB complex plays an important role in the rescue of blocked DNA replication forks via replication fork reversal (RFR). RuvA specifically binds to HJ cruciform DNA, conferring on it an open structure. The RuvB hexamer acts as an ATP-dependent pump, pulling dsDNA into and through the RuvAB complex. RuvB forms 2 homohexamers on either side of HJ DNA bound by 1 or 2 RuvA tetramers; 4 subunits per hexamer contact DNA at a time. Coordinated motions by a converter formed by DNA-disengaged RuvB subunits stimulates ATP hydrolysis and nucleotide exchange. Immobilization of the converter enables RuvB to convert the ATP-contained energy into a lever motion, pulling 2 nucleotides of DNA out of the RuvA tetramer per ATP hydrolyzed, thus driving DNA branch migration. The RuvB motors rotate together with the DNA substrate, which together with the progressing nucleotide cycle form the mechanistic basis for DNA recombination by continuous HJ branch migration. Branch migration allows RuvC to scan DNA until it finds its consensus sequence, where it cleaves and resolves cruciform DNA. The chain is Holliday junction branch migration complex subunit RuvB from Rhodopirellula baltica (strain DSM 10527 / NCIMB 13988 / SH1).